We begin with the raw amino-acid sequence, 873 residues long: Bifunctional uridylyltransferase/uridylyl-removing enzyme (873 aa).

The segment at 1 to 332 (MPYQCPITFN…NGGQTQEAEI (332 aa)) is uridylyltransferase. The segment at 333–692 (LDNDFQRRGS…ISKKATRGGT (360 aa)) is uridylyl-removing. In terms of domain architecture, HD spans 451 to 573 (VDEHSIRLLK…VRDEESLELL (123 aa)). 2 consecutive ACT domains span residues 693–777 (EVFV…RTPR) and 800–873 (LMEL…ELAP).

It belongs to the GlnD family. It depends on Mg(2+) as a cofactor.

It carries out the reaction [protein-PII]-L-tyrosine + UTP = [protein-PII]-uridylyl-L-tyrosine + diphosphate. The enzyme catalyses [protein-PII]-uridylyl-L-tyrosine + H2O = [protein-PII]-L-tyrosine + UMP + H(+). Its activity is regulated as follows. Uridylyltransferase (UTase) activity is inhibited by glutamine, while glutamine activates uridylyl-removing (UR) activity. Its function is as follows. Modifies, by uridylylation and deuridylylation, the PII regulatory proteins (GlnB and homologs), in response to the nitrogen status of the cell that GlnD senses through the glutamine level. Under low glutamine levels, catalyzes the conversion of the PII proteins and UTP to PII-UMP and PPi, while under higher glutamine levels, GlnD hydrolyzes PII-UMP to PII and UMP (deuridylylation). Thus, controls uridylylation state and activity of the PII proteins, and plays an important role in the regulation of nitrogen assimilation and metabolism. The polypeptide is Bifunctional uridylyltransferase/uridylyl-removing enzyme (Vibrio atlanticus (strain LGP32) (Vibrio splendidus (strain Mel32))).